Here is a 143-residue protein sequence, read N- to C-terminus: Transcriptional regulator MraZ (143 aa).

2 SpoVT-AbrB domains span residues 5–47 (TYTP…PREE) and 76–119 (TDEQ…DAQA).

This sequence belongs to the MraZ family. Forms oligomers.

It is found in the cytoplasm. It localises to the nucleoid. The polypeptide is Transcriptional regulator MraZ (Rhodococcus jostii (strain RHA1)).